The chain runs to 174 residues: Small hydrophobic protein (174 aa).

The chain crosses the membrane as a helical span at residues Val-33–Val-53. Asn-165 carries N-linked (GlcNAc...) asparagine; by host glycosylation.

The protein resides in the membrane. This chain is Small hydrophobic protein (SH), found in Meleagris gallopavo (Wild turkey).